A 362-amino-acid polypeptide reads, in one-letter code: DNA replication and repair protein RecF (362 aa).

Position 30 to 37 (30 to 37 (GLNAQGKS)) interacts with ATP.

It belongs to the RecF family.

It localises to the cytoplasm. In terms of biological role, the RecF protein is involved in DNA metabolism; it is required for DNA replication and normal SOS inducibility. RecF binds preferentially to single-stranded, linear DNA. It also seems to bind ATP. This chain is DNA replication and repair protein RecF, found in Thermoanaerobacter pseudethanolicus (strain ATCC 33223 / 39E) (Clostridium thermohydrosulfuricum).